A 550-amino-acid polypeptide reads, in one-letter code: Hydroxylamine reductase (550 aa).

Cys3, Cys6, Cys18, and Cys25 together coordinate [2Fe-2S] cluster. 8 residues coordinate hybrid [4Fe-2O-2S] cluster: His249, Glu273, Cys317, Cys405, Cys433, Cys458, Glu492, and Lys494. Cys405 is subject to Cysteine persulfide.

The protein belongs to the HCP family. Requires [2Fe-2S] cluster as cofactor. Hybrid [4Fe-2O-2S] cluster is required as a cofactor.

The protein resides in the cytoplasm. The enzyme catalyses A + NH4(+) + H2O = hydroxylamine + AH2 + H(+). In terms of biological role, catalyzes the reduction of hydroxylamine to form NH(3) and H(2)O. The polypeptide is Hydroxylamine reductase (Salmonella gallinarum (strain 287/91 / NCTC 13346)).